The chain runs to 322 residues: Phosphatidylserine decarboxylase proenzyme (322 aa).

Residues aspartate 90, histidine 147, and serine 254 each act as charge relay system; for autoendoproteolytic cleavage activity in the active site. Serine 254 acts as the Schiff-base intermediate with substrate; via pyruvic acid; for decarboxylase activity in catalysis. At serine 254 the chain carries Pyruvic acid (Ser); by autocatalysis. The segment at 296 to 322 is disordered; sequence EPAPLPAEEIKAEHDASPLVDNKKDDT. A compositionally biased stretch (basic and acidic residues) spans 303-322; it reads EEIKAEHDASPLVDNKKDDT.

The protein belongs to the phosphatidylserine decarboxylase family. PSD-B subfamily. Prokaryotic type I sub-subfamily. Heterodimer of a large membrane-associated beta subunit and a small pyruvoyl-containing alpha subunit. Pyruvate is required as a cofactor. In terms of processing, is synthesized initially as an inactive proenzyme. Formation of the active enzyme involves a self-maturation process in which the active site pyruvoyl group is generated from an internal serine residue via an autocatalytic post-translational modification. Two non-identical subunits are generated from the proenzyme in this reaction, and the pyruvate is formed at the N-terminus of the alpha chain, which is derived from the carboxyl end of the proenzyme. The autoendoproteolytic cleavage occurs by a canonical serine protease mechanism, in which the side chain hydroxyl group of the serine supplies its oxygen atom to form the C-terminus of the beta chain, while the remainder of the serine residue undergoes an oxidative deamination to produce ammonia and the pyruvoyl prosthetic group on the alpha chain. During this reaction, the Ser that is part of the protease active site of the proenzyme becomes the pyruvoyl prosthetic group, which constitutes an essential element of the active site of the mature decarboxylase.

It localises to the cell membrane. It carries out the reaction a 1,2-diacyl-sn-glycero-3-phospho-L-serine + H(+) = a 1,2-diacyl-sn-glycero-3-phosphoethanolamine + CO2. It functions in the pathway phospholipid metabolism; phosphatidylethanolamine biosynthesis; phosphatidylethanolamine from CDP-diacylglycerol: step 2/2. In terms of biological role, catalyzes the formation of phosphatidylethanolamine (PtdEtn) from phosphatidylserine (PtdSer). This chain is Phosphatidylserine decarboxylase proenzyme, found in Salmonella dublin (strain CT_02021853).